The chain runs to 329 residues: Beta-tectorin (329 aa).

The signal sequence occupies residues 1–17 (MVTKAFVLLAIFAEASA). The ZP domain occupies 19-283 (SCAPNKADVI…LSCPVTCDKR (265 aa)). N-linked (GlcNAc...) asparagine glycosylation is found at Asn80, Asn104, Asn116, and Asn145. Cys204 and Cys264 form a disulfide bridge. The GPI-anchor amidated glycine moiety is linked to residue Gly305. The propeptide at 306-329 (FSSLYSFSDVLHHLIMMLGICAVL) is removed in mature form.

May form homomeric filament after self-association or heteromeric filament after association with alpha-tectorin. Interacts with CEACAM16. Post-translationally, the presence of a hydrophobic C-terminus preceded by a potential cleavage site strongly suggests that tectorins are synthesized as glycosylphosphatidylinositol-linked, membrane-bound precursors. Tectorins are targeted to the apical surface of the inner ear epithelia by the lipid and proteolytically released into the extracellular compartment.

Its subcellular location is the cell membrane. It is found in the secreted. It localises to the extracellular space. The protein localises to the extracellular matrix. Functionally, one of the major non-collagenous components of the tectorial membrane. The tectorial membrane is an extracellular matrix of the inner ear that covers the neuroepithelium of the cochlea and contacts the stereocilia bundles of specialized sensory hair cells. Sound induces movement of these hair cells relative to the tectorial membrane, deflects the stereocilia and leads to fluctuations in hair-cell membrane potential, transducing sound into electrical signals. This Homo sapiens (Human) protein is Beta-tectorin (TECTB).